Here is a 945-residue protein sequence, read N- to C-terminus: Oxysterol-binding protein homolog C23H4.01c (945 aa).

Residues 1-131 enclose the GOLD domain; it reads METVEIRSKS…PKTVTFLLTA (131 aa). Residues 149 to 243 enclose the PH domain; it reads KQIISGTLLK…WCNALEKAKN (95 aa). A phosphoserine mark is found at serine 288, serine 419, and serine 421. Disordered stretches follow at residues 396 to 555 and 846 to 894; these read ESGA…LPHS and LEKD…MEEK. Low complexity predominate over residues 443–454; it reads TSSISDTSSNSS. A compositionally biased stretch (polar residues) spans 460–470; that stretch reads LNATSLASTVD. The span at 482 to 499 shows a compositional bias: basic and acidic residues; the sequence is ESNKENDIKRKQPFHDLM. Serine 503 bears the Phosphoserine mark.

It belongs to the OSBP family.

Its subcellular location is the cytoplasm. In Schizosaccharomyces pombe (strain 972 / ATCC 24843) (Fission yeast), this protein is Oxysterol-binding protein homolog C23H4.01c.